A 558-amino-acid chain; its full sequence is 2-isopropylmalate synthase (558 aa).

Residues 30–303 (PIWCSVDLRD…DPELDCRDIE (274 aa)) form the Pyruvate carboxyltransferase domain. Asp39, His242, His244, and Asn278 together coordinate Mg(2+). Residues 437–558 (QPNARIKFVD…ANRVLEERAK (122 aa)) form a regulatory domain region.

This sequence belongs to the alpha-IPM synthase/homocitrate synthase family. LeuA type 2 subfamily. In terms of assembly, homodimer. The cofactor is Mg(2+).

It localises to the cytoplasm. The catalysed reaction is 3-methyl-2-oxobutanoate + acetyl-CoA + H2O = (2S)-2-isopropylmalate + CoA + H(+). It functions in the pathway amino-acid biosynthesis; L-leucine biosynthesis; L-leucine from 3-methyl-2-oxobutanoate: step 1/4. In terms of biological role, catalyzes the condensation of the acetyl group of acetyl-CoA with 3-methyl-2-oxobutanoate (2-ketoisovalerate) to form 3-carboxy-3-hydroxy-4-methylpentanoate (2-isopropylmalate). This chain is 2-isopropylmalate synthase, found in Agrobacterium fabrum (strain C58 / ATCC 33970) (Agrobacterium tumefaciens (strain C58)).